The primary structure comprises 285 residues: tRNA (cytidine(32)/guanosine(34)-2'-O)-methyltransferase (285 aa).

S-adenosyl-L-methionine is bound by residues G53, W55, D83, D99, and D124. The active-site Proton acceptor is the K164.

This sequence belongs to the class I-like SAM-binding methyltransferase superfamily. RNA methyltransferase RlmE family. TRM7 subfamily.

It is found in the cytoplasm. The catalysed reaction is cytidine(32)/guanosine(34) in tRNA + 2 S-adenosyl-L-methionine = 2'-O-methylcytidine(32)/2'-O-methylguanosine(34) in tRNA + 2 S-adenosyl-L-homocysteine + 2 H(+). Its function is as follows. Methylates the 2'-O-ribose of nucleotides at positions 32 and 34 of the tRNA anticodon loop of substrate tRNAs. Requires trm732 for methylation of the cytidine at position 32 of the anticodon loop of substrate tRNAs. Requires trm734 for methylation of the nucleotide at position 34 of the anticodon loop of substrate tRNAs. Methylates tRNA(Phe). This Schizosaccharomyces pombe (strain 972 / ATCC 24843) (Fission yeast) protein is tRNA (cytidine(32)/guanosine(34)-2'-O)-methyltransferase.